We begin with the raw amino-acid sequence, 298 residues long: Mitochondrial dicarboxylate transporter (298 aa).

Solcar repeat units follow at residues 11–95 (KNIK…LKEN), 103–195 (TNMA…FKNY), and 205–289 (SKNY…LKKH). Helical transmembrane passes span 17–37 (WWYG…LDLA), 58–76 (ILAN…AAVL), 105–126 (MAYL…GNFA), 170–189 (GWKP…VVTY), 211–231 (LTAS…ADVM), and 265–283 (WLPS…FFAI).

It belongs to the mitochondrial carrier (TC 2.A.29) family. Homodimer. Binds to the TIM22 translocation complex during import.

Its subcellular location is the mitochondrion inner membrane. In terms of biological role, mitochondrial dicarboxylic transporter catalyzing the exchange of dicarboxylic acids like malate and succinate for inorganic phosphate. Required for growth on ethanol and acetate. In Saccharomyces cerevisiae (strain ATCC 204508 / S288c) (Baker's yeast), this protein is Mitochondrial dicarboxylate transporter (DIC1).